A 464-amino-acid chain; its full sequence is tRNA modification GTPase MnmE (464 aa).

The (6S)-5-formyl-5,6,7,8-tetrahydrofolate site is built by Arg27, Glu90, and Lys129. Residues 222 to 384 form the TrmE-type G domain; sequence GVALVLAGSV…LYDKIRALIS (163 aa). Residues 232–237, 251–257, and 276–279 each bind GTP; these read NAGKSS, SSYPGTT, and DTAG. Residues Ser236 and Thr257 each contribute to the Mg(2+) site. Lys464 lines the (6S)-5-formyl-5,6,7,8-tetrahydrofolate pocket.

This sequence belongs to the TRAFAC class TrmE-Era-EngA-EngB-Septin-like GTPase superfamily. TrmE GTPase family. Homodimer. Heterotetramer of two MnmE and two MnmG subunits. K(+) serves as cofactor.

Its subcellular location is the cytoplasm. In terms of biological role, exhibits a very high intrinsic GTPase hydrolysis rate. Involved in the addition of a carboxymethylaminomethyl (cmnm) group at the wobble position (U34) of certain tRNAs, forming tRNA-cmnm(5)s(2)U34. This is tRNA modification GTPase MnmE from Borreliella burgdorferi (strain ATCC 35210 / DSM 4680 / CIP 102532 / B31) (Borrelia burgdorferi).